The sequence spans 273 residues: Putative phosphoenolpyruvate synthase regulatory protein (273 aa).

153 to 160 (AVSRAGKT) contributes to the ADP binding site.

Belongs to the pyruvate, phosphate/water dikinase regulatory protein family. PSRP subfamily.

It carries out the reaction [pyruvate, water dikinase] + ADP = [pyruvate, water dikinase]-phosphate + AMP + H(+). The enzyme catalyses [pyruvate, water dikinase]-phosphate + phosphate + H(+) = [pyruvate, water dikinase] + diphosphate. In terms of biological role, bifunctional serine/threonine kinase and phosphorylase involved in the regulation of the phosphoenolpyruvate synthase (PEPS) by catalyzing its phosphorylation/dephosphorylation. The polypeptide is Putative phosphoenolpyruvate synthase regulatory protein (Stenotrophomonas maltophilia (strain K279a)).